The primary structure comprises 418 residues: Glutamyl-tRNA reductase (418 aa).

Substrate contacts are provided by residues 49–52 (TCNR), Ser108, 113–115 (EPQ), and Gln119. Cys50 serves as the catalytic Nucleophile. 188 to 193 (GAGETI) is an NADP(+) binding site.

The protein belongs to the glutamyl-tRNA reductase family. Homodimer.

The enzyme catalyses (S)-4-amino-5-oxopentanoate + tRNA(Glu) + NADP(+) = L-glutamyl-tRNA(Glu) + NADPH + H(+). It functions in the pathway porphyrin-containing compound metabolism; protoporphyrin-IX biosynthesis; 5-aminolevulinate from L-glutamyl-tRNA(Glu): step 1/2. In terms of biological role, catalyzes the NADPH-dependent reduction of glutamyl-tRNA(Glu) to glutamate 1-semialdehyde (GSA). This is Glutamyl-tRNA reductase from Aliivibrio fischeri (strain MJ11) (Vibrio fischeri).